A 388-amino-acid chain; its full sequence is Chorismate synthase (388 aa).

Residues R39 and R45 each coordinate NADP(+). Residues 130–132 (RSS), 251–252 (NA), G296, 311–315 (KPIPT), and R337 contribute to the FMN site.

It belongs to the chorismate synthase family. In terms of assembly, homotetramer. The cofactor is FMNH2.

It carries out the reaction 5-O-(1-carboxyvinyl)-3-phosphoshikimate = chorismate + phosphate. Its pathway is metabolic intermediate biosynthesis; chorismate biosynthesis; chorismate from D-erythrose 4-phosphate and phosphoenolpyruvate: step 7/7. In terms of biological role, catalyzes the anti-1,4-elimination of the C-3 phosphate and the C-6 proR hydrogen from 5-enolpyruvylshikimate-3-phosphate (EPSP) to yield chorismate, which is the branch point compound that serves as the starting substrate for the three terminal pathways of aromatic amino acid biosynthesis. This reaction introduces a second double bond into the aromatic ring system. This chain is Chorismate synthase, found in Geobacillus kaustophilus (strain HTA426).